Reading from the N-terminus, the 201-residue chain is RILP-like protein 2 (201 aa).

The RH1 domain occupies 14 to 108 (GPEIALDKDP…LKDGPQMGVG (95 aa)). The stretch at 67 to 155 (LEMLEALVNQ…AQDELQCYKS (89 aa)) forms a coiled coil. Residues 121-197 (RPRFTLQELR…TVKSLFSFKQ (77 aa)) form the RH2 domain. The segment at 177–201 (SPRENESKEKSTVKSLFSFKQGKQT) is disordered. Basic and acidic residues predominate over residues 179 to 188 (RENESKEKST).

Belongs to the RILPL family.

Its subcellular location is the cytoplasm. It is found in the cytosol. The protein resides in the cytoskeleton. It localises to the microtubule organizing center. The protein localises to the centrosome. Its subcellular location is the cell projection. It is found in the cilium. In terms of biological role, involved in cell shape and neuronal morphogenesis, positively regulating the establishment and maintenance of dendritic spines. Plays a role in cellular protein transport. This Xenopus tropicalis (Western clawed frog) protein is RILP-like protein 2 (rilpl2).